A 431-amino-acid polypeptide reads, in one-letter code: Glutamyl-tRNA reductase (431 aa).

Substrate is bound by residues Thr49 to Arg52, Ser109, Glu114 to Gln116, and Gln120. Catalysis depends on Cys50, which acts as the Nucleophile. Position 189-194 (Gly189–Ala194) interacts with NADP(+).

This sequence belongs to the glutamyl-tRNA reductase family. Homodimer.

The catalysed reaction is (S)-4-amino-5-oxopentanoate + tRNA(Glu) + NADP(+) = L-glutamyl-tRNA(Glu) + NADPH + H(+). Its pathway is porphyrin-containing compound metabolism; protoporphyrin-IX biosynthesis; 5-aminolevulinate from L-glutamyl-tRNA(Glu): step 1/2. The protein operates within porphyrin-containing compound metabolism; chlorophyll biosynthesis. Its function is as follows. Catalyzes the NADPH-dependent reduction of glutamyl-tRNA(Glu) to glutamate 1-semialdehyde (GSA). This Synechococcus sp. (strain JA-3-3Ab) (Cyanobacteria bacterium Yellowstone A-Prime) protein is Glutamyl-tRNA reductase.